A 117-amino-acid chain; its full sequence is Small ribosomal subunit protein eS25 (117 aa).

Residues 1–34 (MPPKKDPKGGKAPPSKKKEGSGGGKAKKKKWSKG) form a disordered region. The segment covering 25-34 (KAKKKKWSKG) has biased composition (basic residues).

This sequence belongs to the eukaryotic ribosomal protein eS25 family.

This chain is Small ribosomal subunit protein eS25 (rps-25), found in Caenorhabditis elegans.